Here is a 147-residue protein sequence, read N- to C-terminus: MSAVAPQKNVVQTHGKKRTAVAVAYATNGKGLIKVNGVPLEFIQPKNLKLKVYEPVLIVGKDVFSQVDIRVRVRGGGSVAQIYAIRQAIAKSIVAYHQKYVDEESKNEIKKKILDYDRSLLVADPRRCEPKKFGGRGARARFQKSYR.

It belongs to the universal ribosomal protein uS9 family.

The polypeptide is Small ribosomal subunit protein uS9 (rps16) (Dictyostelium discoideum (Social amoeba)).